The following is a 564-amino-acid chain: MFS-type efflux pump LUC4 (564 aa).

Over residues 1–15 (MGQSQDNTQLTTASP) the composition is skewed to polar residues. Residues 1–35 (MGQSQDNTQLTTASPQAEKDLSSNDNPPESEPAAP) form a disordered region. 5 consecutive transmembrane segments (helical) span residues 42-62 (WLVF…TSII), 78-98 (LYVW…PIFA), 108-128 (SLTL…GGAH), 141-161 (GVGG…MVSV), and 170-190 (IIGG…GAFA). Asparagine 192 is a glycosylation site (N-linked (GlcNAc...) asparagine). A run of 3 helical transmembrane segments spans residues 197–217 (WIFY…IVFL), 236–256 (WGGS…LSWG), and 268–288 (LVPL…QGAP). Asparagine 302 is a glycosylation site (N-linked (GlcNAc...) asparagine). 5 helical membrane-spanning segments follow: residues 308-328 (LFVI…FLPV), 343-363 (VMLF…GIFI), 371-391 (VWHF…TLLD), 404-424 (LLFG…ILAS), and 436-456 (AWTF…AAAF). An N-linked (GlcNAc...) asparagine glycan is attached at asparagine 461. A helical transmembrane segment spans residues 512–532 (KLVWQVSIAFSVLGFVLAFLV).

Belongs to the major facilitator superfamily. TCR/Tet family.

It is found in the membrane. Its function is as follows. MFS-type efflux pump; part of the gene cluster that mediates the biosynthesis of the mycotoxin lucilactaene and the lucilactaene-related compound NG-391 that act as cell cycle inhibitors with potent growth inhibitory activity against malarial parasites, moderate growth inhibitory activity against cancer cells, and no activity against bacteria and fungi. The chain is MFS-type efflux pump LUC4 from Fusarium sp.